A 296-amino-acid polypeptide reads, in one-letter code: 4-hydroxybenzoate octaprenyltransferase (296 aa).

The next 8 membrane-spanning stretches (helical) occupy residues 29 to 49 (AGWLLLLWPTLSALWVAAGGF), 52 to 72 (WHLLSVFTLGTILMRSAGCCI), 103 to 123 (LVLGAVLALLAFALVLTTNAI), 151 to 171 (VLGVAFGMGIPMAFAAVLGEV), 176 to 196 (WLLMLGNLFWVLAYDTEYAMV), 220 to 240 (VILLCYLAFIVIWDVALMPYV), 243 to 263 (ALFTIAFALAFGQVAWHYTLI), and 275 to 295 (FRLNHWLGFTLFVGIAGSYAL).

The protein belongs to the UbiA prenyltransferase family. The cofactor is Mg(2+).

It is found in the cell inner membrane. It catalyses the reaction all-trans-octaprenyl diphosphate + 4-hydroxybenzoate = 4-hydroxy-3-(all-trans-octaprenyl)benzoate + diphosphate. It functions in the pathway cofactor biosynthesis; ubiquinone biosynthesis. Functionally, catalyzes the prenylation of para-hydroxybenzoate (PHB) with an all-trans polyprenyl group. Mediates the second step in the final reaction sequence of ubiquinone-8 (UQ-8) biosynthesis, which is the condensation of the polyisoprenoid side chain with PHB, generating the first membrane-bound Q intermediate 3-octaprenyl-4-hydroxybenzoate. This chain is 4-hydroxybenzoate octaprenyltransferase, found in Albidiferax ferrireducens (strain ATCC BAA-621 / DSM 15236 / T118) (Rhodoferax ferrireducens).